Consider the following 320-residue polypeptide: Beta-ketoacyl-[acyl-carrier-protein] synthase III (320 aa).

Residues Cys113 and His247 contribute to the active site. The interval 248 to 252 (QANRR) is ACP-binding. Residue Asn277 is part of the active site.

Belongs to the thiolase-like superfamily. FabH family. As to quaternary structure, homodimer.

It is found in the cytoplasm. The catalysed reaction is malonyl-[ACP] + acetyl-CoA + H(+) = 3-oxobutanoyl-[ACP] + CO2 + CoA. Its pathway is lipid metabolism; fatty acid biosynthesis. In terms of biological role, catalyzes the condensation reaction of fatty acid synthesis by the addition to an acyl acceptor of two carbons from malonyl-ACP. Catalyzes the first condensation reaction which initiates fatty acid synthesis and may therefore play a role in governing the total rate of fatty acid production. Possesses both acetoacetyl-ACP synthase and acetyl transacylase activities. Its substrate specificity determines the biosynthesis of branched-chain and/or straight-chain of fatty acids. The protein is Beta-ketoacyl-[acyl-carrier-protein] synthase III of Acidiphilium cryptum (strain JF-5).